The sequence spans 360 residues: Magnesium-protoporphyrin IX monomethyl ester [oxidative] cyclase (360 aa).

The disordered stretch occupies residues 1–21; that stretch reads MPPTAVTEATAVPGSNVTTKD.

It belongs to the AcsF family. It depends on Fe cation as a cofactor.

The catalysed reaction is Mg-protoporphyrin IX 13-monomethyl ester + 3 NADPH + 3 O2 + 2 H(+) = 3,8-divinyl protochlorophyllide a + 3 NADP(+) + 5 H2O. Its pathway is porphyrin-containing compound metabolism; chlorophyll biosynthesis (light-independent). Catalyzes the formation of the isocyclic ring in chlorophyll biosynthesis. Mediates the cyclase reaction, which results in the formation of divinylprotochlorophyllide (Pchlide) characteristic of all chlorophylls from magnesium-protoporphyrin IX 13-monomethyl ester (MgPMME). This is Magnesium-protoporphyrin IX monomethyl ester [oxidative] cyclase from Synechococcus sp. (strain CC9311).